Here is a 234-residue protein sequence, read N- to C-terminus: Triosephosphate isomerase (234 aa).

8-10 (NFK) is a binding site for substrate. H90 acts as the Electrophile in catalysis. Residue E159 is the Proton acceptor of the active site. Substrate-binding residues include G165 and S197.

This sequence belongs to the triosephosphate isomerase family. As to quaternary structure, homodimer.

The protein localises to the cytoplasm. It carries out the reaction D-glyceraldehyde 3-phosphate = dihydroxyacetone phosphate. The protein operates within carbohydrate biosynthesis; gluconeogenesis. Its pathway is carbohydrate degradation; glycolysis; D-glyceraldehyde 3-phosphate from glycerone phosphate: step 1/1. Its function is as follows. Involved in the gluconeogenesis. Catalyzes stereospecifically the conversion of dihydroxyacetone phosphate (DHAP) to D-glyceraldehyde-3-phosphate (G3P). In Helicobacter pylori (strain J99 / ATCC 700824) (Campylobacter pylori J99), this protein is Triosephosphate isomerase.